The chain runs to 530 residues: Lanosterol 14-alpha demethylase CYP51 (530 aa).

Residues 1 to 20 are Lumenal-facing; sequence MSATKSIVGEALEYVNIGLS. Residues 21-41 traverse the membrane as a helical segment; that stretch reads HFLALPLAQRISLIIIIPFIY. Topologically, residues 42–530 are cytoplasmic; the sequence is NIVWQLLYSL…WEKRNPEQKI (489 aa). A Glycyl lysine isopeptide (Lys-Gly) (interchain with G-Cter in ubiquitin) cross-link involves residue K116. Y126 provides a ligand contact to lanosterol. G314 lines the itraconazole pocket. Glycyl lysine isopeptide (Lys-Gly) (interchain with G-Cter in ubiquitin) cross-links involve residues K353 and K454. S458 is modified (phosphoserine). A heme-binding site is contributed by C470.

The protein belongs to the cytochrome P450 family. Interacts with ERG28. Heme is required as a cofactor.

The protein localises to the endoplasmic reticulum membrane. It carries out the reaction a 14alpha-methyl steroid + 3 reduced [NADPH--hemoprotein reductase] + 3 O2 = a Delta(14) steroid + formate + 3 oxidized [NADPH--hemoprotein reductase] + 4 H2O + 4 H(+). The catalysed reaction is a 14alpha-methyl steroid + reduced [NADPH--hemoprotein reductase] + O2 = a 14alpha-hydroxymethyl steroid + oxidized [NADPH--hemoprotein reductase] + H2O + H(+). It catalyses the reaction a 14alpha-hydroxymethyl steroid + reduced [NADPH--hemoprotein reductase] + O2 = a 14alpha-formyl steroid + oxidized [NADPH--hemoprotein reductase] + 2 H2O + H(+). The enzyme catalyses a 14alpha-formyl steroid + reduced [NADPH--hemoprotein reductase] + O2 = a Delta(14) steroid + formate + oxidized [NADPH--hemoprotein reductase] + H2O + 2 H(+). It carries out the reaction lanosterol + 3 reduced [NADPH--hemoprotein reductase] + 3 O2 = 4,4-dimethyl-5alpha-cholesta-8,14,24-trien-3beta-ol + formate + 3 oxidized [NADPH--hemoprotein reductase] + 4 H2O + 4 H(+). The catalysed reaction is lanosterol + reduced [NADPH--hemoprotein reductase] + O2 = 32-hydroxylanosterol + oxidized [NADPH--hemoprotein reductase] + H2O + H(+). It catalyses the reaction 32-hydroxylanosterol + reduced [NADPH--hemoprotein reductase] + O2 = 32-oxolanosterol + oxidized [NADPH--hemoprotein reductase] + 2 H2O + H(+). The enzyme catalyses 32-oxolanosterol + reduced [NADPH--hemoprotein reductase] + O2 = 4,4-dimethyl-5alpha-cholesta-8,14,24-trien-3beta-ol + formate + oxidized [NADPH--hemoprotein reductase] + H2O + 2 H(+). The protein operates within steroid biosynthesis; zymosterol biosynthesis; zymosterol from lanosterol: step 1/6. Sterol 14alpha-demethylase that plays a critical role in the third module of ergosterol biosynthesis pathway, being ergosterol the major sterol component in fungal membranes that participates in a variety of functions. The third module or late pathway involves the ergosterol synthesis itself through consecutive reactions that mainly occur in the endoplasmic reticulum (ER) membrane. Starting from lanosterol (lanosta-8,24-dien-3beta-ol), it catalyzes the three-step oxidative removal of the 14alpha-methyl group (C-32) of the sterol in the form of formate, and converts the sterol to 4,4-dimethyl-5alpha-cholesta-8,14,24-trien-3beta-ol, which is critical for ergosterol biosynthesis. Can demethylate substrates not intrinsic to yeast, such as eburicol (24-methylene-24,25-dihydrolanosterol) at a similar rate to lanosterol, and at a lower rate the 24,25-dihydrolanosterol (DHL) to 4,4-dimethyl-8,14-cholestadien-3beta-ol. The chain is Lanosterol 14-alpha demethylase CYP51 from Saccharomyces cerevisiae (strain ATCC 204508 / S288c) (Baker's yeast).